The sequence spans 401 residues: Probable trafficking protein particle complex subunit 13 homolog (401 aa).

Belongs to the TRAPPC13 family.

This is Probable trafficking protein particle complex subunit 13 homolog from Caenorhabditis elegans.